Reading from the N-terminus, the 901-residue chain is HTH-type transcriptional regulator MalT (901 aa).

ATP is bound at residue 39 to 46; sequence SPAGYGKT. An HTH luxR-type domain is found at 829-894; it reads ELIRTSPLTQ…DAVQHAQQLL (66 aa). The H-T-H motif DNA-binding region spans 853 to 872; the sequence is NDQIAGELDVAATTIKTHIR.

Belongs to the MalT family. As to quaternary structure, monomer in solution. Oligomerizes to an active state in the presence of the positive effectors ATP and maltotriose.

Activated by ATP and maltotriose, which are both required for DNA binding. In terms of biological role, positively regulates the transcription of the maltose regulon whose gene products are responsible for uptake and catabolism of malto-oligosaccharides. Specifically binds to the promoter region of its target genes, recognizing a short DNA motif called the MalT box. The polypeptide is HTH-type transcriptional regulator MalT (Cronobacter sakazakii (strain ATCC BAA-894) (Enterobacter sakazakii)).